The chain runs to 273 residues: Dermonecrotic toxin LarSicTox-alphaVII1 (273 aa).

The active site involves H5. Residues E25 and D27 each contribute to the Mg(2+) site. Catalysis depends on H41, which acts as the Nucleophile. 2 cysteine pairs are disulfide-bonded: C45-C51 and C47-C192. D85 is a Mg(2+) binding site.

Belongs to the arthropod phospholipase D family. Class II subfamily. The cofactor is Mg(2+). Expressed by the venom gland.

It is found in the secreted. The catalysed reaction is an N-(acyl)-sphingosylphosphocholine = an N-(acyl)-sphingosyl-1,3-cyclic phosphate + choline. It catalyses the reaction an N-(acyl)-sphingosylphosphoethanolamine = an N-(acyl)-sphingosyl-1,3-cyclic phosphate + ethanolamine. The enzyme catalyses a 1-acyl-sn-glycero-3-phosphocholine = a 1-acyl-sn-glycero-2,3-cyclic phosphate + choline. It carries out the reaction a 1-acyl-sn-glycero-3-phosphoethanolamine = a 1-acyl-sn-glycero-2,3-cyclic phosphate + ethanolamine. In terms of biological role, dermonecrotic toxins cleave the phosphodiester linkage between the phosphate and headgroup of certain phospholipids (sphingolipid and lysolipid substrates), forming an alcohol (often choline) and a cyclic phosphate. This toxin acts on sphingomyelin (SM). It may also act on ceramide phosphoethanolamine (CPE), lysophosphatidylcholine (LPC) and lysophosphatidylethanolamine (LPE), but not on lysophosphatidylserine (LPS), and lysophosphatidylglycerol (LPG). It acts by transphosphatidylation, releasing exclusively cyclic phosphate products as second products. Induces dermonecrosis, hemolysis, increased vascular permeability, edema, inflammatory response, and platelet aggregation. This is Dermonecrotic toxin LarSicTox-alphaVII1 from Loxosceles arizonica (Arizona brown spider).